The sequence spans 144 residues: 3-dehydroquinate dehydratase (144 aa).

Tyr-22 (proton acceptor) is an active-site residue. Asn-73, His-79, and Asp-86 together coordinate substrate. The active-site Proton donor is His-99. Residues 100–101 (LS) and Arg-110 each bind substrate.

This sequence belongs to the type-II 3-dehydroquinase family. As to quaternary structure, homododecamer.

The enzyme catalyses 3-dehydroquinate = 3-dehydroshikimate + H2O. The protein operates within metabolic intermediate biosynthesis; chorismate biosynthesis; chorismate from D-erythrose 4-phosphate and phosphoenolpyruvate: step 3/7. Functionally, catalyzes a trans-dehydration via an enolate intermediate. This Geotalea daltonii (strain DSM 22248 / JCM 15807 / FRC-32) (Geobacter daltonii) protein is 3-dehydroquinate dehydratase.